We begin with the raw amino-acid sequence, 568 residues long: MRVSQFFLSTLKEAPAEAELASHRLMLRAGLIKRLGSGLYTWMPLGLRILHKIEHIIREEMNSSGALELLMPAVHPAELWQESGRWDVFGPQMLKIQDRHQHDFCFGPTHEEVIVDIARREIKSYRQLPINFYQIQTKFRDEIRPRFGVMRAREFIMKDAYSFHADLGSLEQTYQLMHETYSRIFTRIGLKFRAVAADTGAIGGSGSHEFHVLADSGEDAIAFCPDSDYAANIELAEAISHGILRKDPAGVMKKIATPDRKSCSDVAEFLSVPIEQTLKTLAVIADGRFYLLLLRGDHQLNETKTRKIPFLSNFEFADESRIIAKTGCLPGYLGPIGVKTEIIADRAVLEMSNFVCGANEEGYHLTQVNFERDLPLPVQVFDIRNVVTGDPSPDGKGMLEICRGIEVGHIFQLRTKYSEKMKATYLDESGQTQILEMGCYGIGVSRIVAAAIEQNCDERGIIFPVAIAPFQLSIIPIGYHKNLQIQAEVEKLYRACRAAGIEVLLDDREERPGVMFADQELIGIPHRIVIGERNLRDGMVEYQGRLDKTSRLLSLQEVIPVIREICGG.

Belongs to the class-II aminoacyl-tRNA synthetase family. ProS type 1 subfamily. As to quaternary structure, homodimer.

The protein localises to the cytoplasm. The catalysed reaction is tRNA(Pro) + L-proline + ATP = L-prolyl-tRNA(Pro) + AMP + diphosphate. In terms of biological role, catalyzes the attachment of proline to tRNA(Pro) in a two-step reaction: proline is first activated by ATP to form Pro-AMP and then transferred to the acceptor end of tRNA(Pro). As ProRS can inadvertently accommodate and process non-cognate amino acids such as alanine and cysteine, to avoid such errors it has two additional distinct editing activities against alanine. One activity is designated as 'pretransfer' editing and involves the tRNA(Pro)-independent hydrolysis of activated Ala-AMP. The other activity is designated 'posttransfer' editing and involves deacylation of mischarged Ala-tRNA(Pro). The misacylated Cys-tRNA(Pro) is not edited by ProRS. The sequence is that of Proline--tRNA ligase from Nitrosomonas eutropha (strain DSM 101675 / C91 / Nm57).